Here is a 733-residue protein sequence, read N- to C-terminus: Photosystem I P700 chlorophyll a apoprotein A2 (733 aa).

The next 8 helical transmembrane spans lie at isoleucine 46 to alanine 69, leucine 135 to glutamine 158, leucine 175 to isoleucine 199, isoleucine 273 to tyrosine 291, leucine 330 to tyrosine 353, alanine 369 to valine 395, alanine 417 to histidine 439, and phenylalanine 516 to valine 534. [4Fe-4S] cluster-binding residues include cysteine 558 and cysteine 567. A run of 2 helical transmembrane segments spans residues alanine 574–tryptophan 595 and leucine 642–isoleucine 664. Residues histidine 653, methionine 661, and tyrosine 669 each contribute to the chlorophyll a site. Phylloquinone is bound at residue tryptophan 670. A helical transmembrane segment spans residues leucine 706–alanine 726.

This sequence belongs to the PsaA/PsaB family. In terms of assembly, the PsaA/B heterodimer binds the P700 chlorophyll special pair and subsequent electron acceptors. PSI consists of a core antenna complex that captures photons, and an electron transfer chain that converts photonic excitation into a charge separation. The cyanobacterial PSI reaction center is composed of one copy each of PsaA,B,C,D,E,F,I,J,K,L,M and X, and forms trimeric complexes. Requires PSI electron transfer chain: 5 chlorophyll a, 1 chlorophyll a', 2 phylloquinones and 3 4Fe-4S clusters. PSI core antenna: 90 chlorophyll a, 22 carotenoids, 3 phospholipids and 1 galactolipid. P700 is a chlorophyll a/chlorophyll a' dimer, A0 is one or more chlorophyll a, A1 is one or both phylloquinones and FX is a shared 4Fe-4S iron-sulfur center. as cofactor.

The protein resides in the cellular thylakoid membrane. The catalysed reaction is reduced [plastocyanin] + hnu + oxidized [2Fe-2S]-[ferredoxin] = oxidized [plastocyanin] + reduced [2Fe-2S]-[ferredoxin]. Functionally, psaA and PsaB bind P700, the primary electron donor of photosystem I (PSI), as well as the electron acceptors A0, A1 and FX. PSI is a plastocyanin/cytochrome c6-ferredoxin oxidoreductase, converting photonic excitation into a charge separation, which transfers an electron from the donor P700 chlorophyll pair to the spectroscopically characterized acceptors A0, A1, FX, FA and FB in turn. Oxidized P700 is reduced on the lumenal side of the thylakoid membrane by plastocyanin or cytochrome c6. The sequence is that of Photosystem I P700 chlorophyll a apoprotein A2 from Picosynechococcus sp. (strain ATCC 27264 / PCC 7002 / PR-6) (Agmenellum quadruplicatum).